Reading from the N-terminus, the 159-residue chain is Ubiquitin-like protein ATG12 (159 aa).

A disordered region spans residues 1–40; that stretch reads MASPQPPFGGGSNSNSNTASPSNNLSPTASPLLEGRDSPN. Residues 13-27 are compositionally biased toward low complexity; that stretch reads NSNSNTASPSNNLSP. Residue Gly-159 forms a Glycyl lysine isopeptide (Gly-Lys) (interchain with K-218 in ATG5) linkage.

The protein belongs to the ATG12 family. As to quaternary structure, forms a conjugate with ATG5. Forms a thioester bond with the 'Cys-116' of ATG10. Interacts with the ATG7 C-terminal 40 amino acids domain. The ATG12-ATG5 conjugate forms a complex with several units of ATG16. The ATG12-ATG5 conjugate also associates with ATG3.

The protein localises to the preautophagosomal structure membrane. It is found in the cytoplasm. Ubiquitin-like protein involved in cytoplasm to vacuole transport (Cvt), autophagy vesicles formation, mitophagy, and nucleophagy. Conjugation with ATG5 through a ubiquitin-like conjugating system involving also ATG7 as an E1-like activating enzyme and ATG10 as an E2-like conjugating enzyme, is essential for its function. The ATG12-ATG5 conjugate acts as an E3-like enzyme which is required for lipidation of ATG8 and ATG8 association to the vesicle membranes. ATG12-ATG5 rearranges the ATG3 catalytic center and enhances its E2 activity. Plays a role in sexual development and perithecia formation. This is Ubiquitin-like protein ATG12 from Sordaria macrospora (strain ATCC MYA-333 / DSM 997 / K(L3346) / K-hell).